The following is a 383-amino-acid chain: MCRSVSNMLDRISGLSKDASPNSTTTIQEIITLEKCLTSKVSALFLICKMLKIPACPVCDVPCRIEPHFGGIACAACAAFFRRTVSLNIGYMCKREKLCRKARKSCRACRFERCVKSAGLQRDYVRQLLTPRNTPLYILNRQDNTGGEIVRAFASPTMPKPEPTPQLGFSDILKVSNSSLFKFYLNQVEKAVKLRQKNTLTIKTNAELLKIVATQQELALEACRTCPGMDLLDKEDRKVVQKYFVFSNVWIESTWLYSLAKEHLETENNLNFDINLKKFIEQVKSTLLFSFSQFKLNIFELAAFKAICIWKLIYHETSRAMKIIAQEHYDGVASALRNYYETHTSMDHSEIAIRIGEITLLVVSIFQLYHDMAKLYVQIGIPF.

Residues 53 to 127 (IPACPVCDVP…AGLQRDYVRQ (75 aa)) constitute a DNA-binding region (nuclear receptor). NR C4-type zinc fingers lie at residues 56 to 77 (CPVC…CAAC) and 93 to 109 (CKRE…CRAC). One can recognise an NR LBD domain in the interval 172–383 (ILKVSNSSLF…KLYVQIGIPF (212 aa)).

Belongs to the nuclear hormone receptor family.

Its subcellular location is the nucleus. Its function is as follows. Orphan nuclear receptor. The sequence is that of Nuclear hormone receptor family member nhr-217 (nhr-217) from Caenorhabditis elegans.